We begin with the raw amino-acid sequence, 463 residues long: DDB1- and CUL4-associated factor 12-like protein 1 (463 aa).

Positions methionine 1–glycine 35 are disordered. WD repeat units lie at residues leucine 87–arginine 137, aspartate 138–proline 184, leucine 185–alanine 252, isoleucine 253–arginine 297, leucine 298–isoleucine 341, and arginine 342–aspartate 376.

This sequence belongs to the WD repeat DCAF12 family.

This chain is DDB1- and CUL4-associated factor 12-like protein 1 (DCAF12L1), found in Homo sapiens (Human).